Consider the following 635-residue polypeptide: Extracellular metalloproteinase MEP (635 aa).

An N-terminal signal peptide occupies residues 1-19 (MRYSLSLALLGVAAVTVVA). The propeptide occupies 20-242 (HPHTPGRHGV…VHGVVDYVSH (223 aa)). His428 is a Zn(2+) binding site. Glu429 is a catalytic residue. Residue His432 coordinates Zn(2+). N-linked (GlcNAc...) asparagine glycosylation occurs at Asn473.

Belongs to the peptidase M36 family. Zn(2+) is required as a cofactor.

It is found in the secreted. Its function is as follows. Secreted metalloproteinase that allows assimilation of proteinaceous substrates. The sequence is that of Extracellular metalloproteinase MEP (MEP) from Pyricularia oryzae (strain 70-15 / ATCC MYA-4617 / FGSC 8958) (Rice blast fungus).